The primary structure comprises 1760 residues: Chitin synthase A (1760 aa).

An N-linked (GlcNAc...) asparagine glycan is attached at N157. Transmembrane regions (helical) follow at residues 729-749 (IWTGFVWALTFWIPSFVLRFV) and 765-785 (LVLVFLILLFNAIVCFYIIAF). N-linked (GlcNAc...) asparagine glycosylation is found at N876 and N996. A helical transmembrane segment spans residues 1027–1047 (ILLAFTCLICAVILVKFLAAL). N-linked (GlcNAc...) asparagine glycosylation occurs at N1392. The next 3 helical transmembrane spans lie at 1417 to 1437 (FVVLVDLLGTIILPATCVYLG), 1449 to 1469 (IPIISIAILAGVYGLQAIIFI), and 1477 to 1497 (IGWMIIYICAYPIYSFVLPMY). N1557, N1645, and N1650 each carry an N-linked (GlcNAc...) asparagine glycan. Residues 1670-1691 (DNLLGVPRPNSRSPVGGYTSRP) are disordered. Residues 1702–1758 (GPDEMAITDAIRSCLAEVDLDTVTKKQVRALVEQRLQATLTGDKRAFLDRQIDQELA) enclose the DEK-C domain.

Belongs to the chitin synthase family. Class V subfamily.

The protein localises to the cell membrane. It carries out the reaction [(1-&gt;4)-N-acetyl-beta-D-glucosaminyl](n) + UDP-N-acetyl-alpha-D-glucosamine = [(1-&gt;4)-N-acetyl-beta-D-glucosaminyl](n+1) + UDP + H(+). Functionally, polymerizes chitin, a structural polymer of the cell wall and septum, by transferring the sugar moiety of UDP-GlcNAc to the non-reducing end of the growing chitin polymer. Plays an important role in cell-wall formation during both hyphal growth and conidiation. This chain is Chitin synthase A, found in Aspergillus oryzae (strain ATCC 42149 / RIB 40) (Yellow koji mold).